Here is a 195-residue protein sequence, read N- to C-terminus: Probable nicotinate-nucleotide adenylyltransferase (195 aa).

Belongs to the NadD family.

The enzyme catalyses nicotinate beta-D-ribonucleotide + ATP + H(+) = deamido-NAD(+) + diphosphate. It functions in the pathway cofactor biosynthesis; NAD(+) biosynthesis; deamido-NAD(+) from nicotinate D-ribonucleotide: step 1/1. Catalyzes the reversible adenylation of nicotinate mononucleotide (NaMN) to nicotinic acid adenine dinucleotide (NaAD). The sequence is that of Probable nicotinate-nucleotide adenylyltransferase from Dictyoglomus thermophilum (strain ATCC 35947 / DSM 3960 / H-6-12).